We begin with the raw amino-acid sequence, 628 residues long: tRNA uridine 5-carboxymethylaminomethyl modification enzyme MnmG (628 aa).

FAD-binding positions include glycine 14–glycine 19, valine 126, and serine 181. Glycine 273–phenylalanine 287 contacts NAD(+). FAD is bound at residue glutamine 370.

It belongs to the MnmG family. Homodimer. Heterotetramer of two MnmE and two MnmG subunits. FAD is required as a cofactor.

It localises to the cytoplasm. Functionally, NAD-binding protein involved in the addition of a carboxymethylaminomethyl (cmnm) group at the wobble position (U34) of certain tRNAs, forming tRNA-cmnm(5)s(2)U34. The sequence is that of tRNA uridine 5-carboxymethylaminomethyl modification enzyme MnmG from Exiguobacterium sibiricum (strain DSM 17290 / CCUG 55495 / CIP 109462 / JCM 13490 / 255-15).